The chain runs to 152 residues: Em-like protein GEA1 (152 aa).

Basic and acidic residues-rich tracts occupy residues 1–17 and 32–63; these read MASK…KAKQ and EAQE…IGHK. The disordered stretch occupies residues 1 to 63; it reads MASKQLSREE…HEGYQEIGHK (63 aa). 4 consecutive repeat copies span residues 44–63, 64–83, 84–103, and 104–123. The interval 44–123 is 4 X 20 AA tandem repeats; the sequence is GGQTRKEQLG…HEGYKEMGRK (80 aa). Residues 116 to 152 form a disordered region; the sequence is GYKEMGRKGGLSTMEKSGGERAEEEGIEIDESKFTNK.

The protein belongs to the small hydrophilic plant seed protein family. In seeds only. Specifically located to vascular bundles in the cotyledon and axis of the dry seed. Also found in the epiderm and outer layers of the cortex in the embryo axis.

It is thought to provide protection for the cytoplasm during the desiccation stage of embryo development. This Arabidopsis thaliana (Mouse-ear cress) protein is Em-like protein GEA1 (EM1).